A 394-amino-acid chain; its full sequence is MATIFLFTKNVFIALAFALFAQGLTIPDGIEKRTDKVVSLDFTVIRKPFNATAHRLIQKRSDVPTTLINEGPSYAADIVVGSNQQKQTVVIDTGSSDLWVVDTDAECQVTYSGQTNNFCKQEGTFDPSSSSSAQNLNQDFSIEYGDLTSSQGSFYKDTVGFGGISIKNQQFADVTTTSVDQGIMGIGFTAVEAGYNLYSNVPVTLKKQGIINKNAYSCDLNSEDASTGKIIFGGVDNAKYTGTLTALPVTSSVELRVHLGSINFDGTSVSTNADVVLDSGTTITYFSQSTADKFARIVGATWDSRNEIYRLPSCDLSGDAVVNFDQGVKITVPLSELILKDSDSSICYFGISRNDANILGDNFLRRAYIVYDLDDKTISLAQVKYTSSSDISAL.

The N-terminal stretch at 1 to 23 (MATIFLFTKNVFIALAFALFAQG) is a signal peptide. A propeptide spans 24 to 60 (LTIPDGIEKRTDKVVSLDFTVIRKPFNATAHRLIQKR) (activation peptide). Residue N50 is glycosylated (N-linked (GlcNAc...) asparagine). Residues 74-381 (YAADIVVGSN…DLDDKTISLA (308 aa)) enclose the Peptidase A1 domain. Residue D92 is part of the active site. C107 and C119 form a disulfide bridge. D278 is a catalytic residue. C314 and C347 are joined by a disulfide.

This sequence belongs to the peptidase A1 family. In terms of processing, O-glycosylated.

The protein resides in the secreted. The catalysed reaction is Preferential cleavage at the carboxyl of hydrophobic amino acids, but fails to cleave 15-Leu-|-Tyr-16, 16-Tyr-|-Leu-17 and 24-Phe-|-Phe-25 of insulin B chain. Activates trypsinogen, and degrades keratin.. The protein is Candidapepsin (SAPT1) of Candida tropicalis (Yeast).